The primary structure comprises 337 residues: GTP 3',8-cyclase (337 aa).

In terms of domain architecture, Radical SAM core spans 17–243 (PFQRQYYYLR…HKSHTDGPAK (227 aa)). R26 provides a ligand contact to GTP. [4Fe-4S] cluster is bound by residues C33 and C37. Residue Y39 participates in S-adenosyl-L-methionine binding. C40 is a binding site for [4Fe-4S] cluster. Position 76 (R76) interacts with GTP. Residue G80 participates in S-adenosyl-L-methionine binding. A GTP-binding site is contributed by T107. S-adenosyl-L-methionine is bound at residue S131. Residue K168 coordinates GTP. M202 is a binding site for S-adenosyl-L-methionine. C265 and C268 together coordinate [4Fe-4S] cluster. 270–272 (RLR) serves as a coordination point for GTP. C282 lines the [4Fe-4S] cluster pocket.

It belongs to the radical SAM superfamily. MoaA family. In terms of assembly, monomer and homodimer. Requires [4Fe-4S] cluster as cofactor.

The enzyme catalyses GTP + AH2 + S-adenosyl-L-methionine = (8S)-3',8-cyclo-7,8-dihydroguanosine 5'-triphosphate + 5'-deoxyadenosine + L-methionine + A + H(+). It functions in the pathway cofactor biosynthesis; molybdopterin biosynthesis. Its function is as follows. Catalyzes the cyclization of GTP to (8S)-3',8-cyclo-7,8-dihydroguanosine 5'-triphosphate. This chain is GTP 3',8-cyclase, found in Haemophilus influenzae (strain PittEE).